The following is a 397-amino-acid chain: Mesoderm posterior protein 2 (397 aa).

Disordered stretches follow at residues 28–92 (WDST…REKL), 152–208 (QRGD…GRRP), 222–295 (SPSA…VPWT), and 351–376 (PNSE…SGLR). Low complexity-rich tracts occupy residues 32-48 (SPAS…CDGA) and 58-71 (SCSS…ATTP). Residues 81 to 135 (GQRQSASEREKLRMRTLARALHELRRFLPPSLAPAGQSLTKIETLRLAIRYIGHL) enclose the bHLH domain. A run of 13 repeats spans residues 179 to 180 (GQ), 181 to 182 (GQ), 183 to 184 (GQ), 185 to 186 (GQ), 187 to 188 (GQ), 189 to 190 (GQ), 191 to 192 (GQ), 193 to 194 (GQ), 195 to 196 (GQ), 197 to 198 (GQ), 199 to 200 (GQ), 201 to 202 (GQ), and 203 to 204 (GQ). Residues 179–204 (GQGQGQGQGQGQGQGQGQGQGQGQGQ) are 13 X 2 AA tandem repeats of G-Q. Over residues 180–206 (QGQGQGQGQGQGQGQGQGQGQGQGQGR) the composition is skewed to gly residues. Residues 235-244 (RLGRGVHDTD) are compositionally biased toward basic and acidic residues. Composition is skewed to polar residues over residues 258–270 (PPYS…SDAS) and 365–375 (SEASPPQSSGL).

Post-translationally, degraded by the proteasome.

The protein localises to the nucleus. Functionally, transcription factor with important role in somitogenesis. Defines the rostrocaudal patterning of the somite by participating in distinct Notch pathways. Also regulates the FGF signaling pathway. Specifies the rostral half of the somites. Generates rostro-caudal polarity of somites by down-regulating in the presumptive rostral domain DLL1, a Notch ligand. Participates in the segment border formation by activating in the anterior presomitic mesoderm LFNG, a negative regulator of DLL1-Notch signaling. Acts as a strong suppressor of Notch activity. Together with MESP1 is involved in the epithelialization of somitic mesoderm and in the development of cardiac mesoderm. The chain is Mesoderm posterior protein 2 (MESP2) from Homo sapiens (Human).